We begin with the raw amino-acid sequence, 543 residues long: Sarafotoxin (543 aa).

Positions 1–23 are cleaved as a signal peptide; it reads MALLPRLAAGGLLLLLALAALEG. A propeptide spanning residues 24 to 69 is cleaved from the precursor; sequence KPAPSALSQLLEKRSEDQAAAGRIIDGGDTKQAARDPSPQRNVEPL. The interval 45-65 is disordered; sequence GRIIDGGDTKQAARDPSPQRN. Tandem repeats lie at residues 51–90, 91–130, 131–170, 171–210, 211–250, 251–290, 291–330, 331–370, 371–410, 411–450, 451–490, and 491–530. Positions 51–530 are 12 X 40 AA tandem repeats; it reads GDTKQAARDP…LNFCHQDVIW (480 aa). Disulfide bonds link Cys-70–Cys-84 and Cys-72–Cys-80. Residues 92 to 109 constitute a propeptide that is removed on maturation; that stretch reads DTKQAARDPSPQRNVEPL. 2 disulfides stabilise this stretch: Cys-110-Cys-124 and Cys-112-Cys-120. Residues 132–149 constitute a propeptide that is removed on maturation; sequence DTKQAARDPSPQRNVEPL. 2 cysteine pairs are disulfide-bonded: Cys-150–Cys-164 and Cys-152–Cys-160. A propeptide spanning residues 172-189 is cleaved from the precursor; it reads DTKQAARDPSPQRNVEPL. 2 cysteine pairs are disulfide-bonded: Cys-190-Cys-204 and Cys-192-Cys-200. Positions 212–229 are excised as a propeptide; the sequence is DTKQAARDPSPQRNVEPL. Intrachain disulfides connect Cys-230–Cys-244 and Cys-232–Cys-240. The propeptide occupies 252–269; the sequence is DTKQAARDPSPQRNVEPL. Intrachain disulfides connect Cys-270–Cys-284 and Cys-272–Cys-280. Positions 292 to 309 are excised as a propeptide; it reads DTKQAARDPSPQRNVEPL. 2 disulfide bridges follow: Cys-310/Cys-324 and Cys-312/Cys-320. Positions 332 to 349 are excised as a propeptide; sequence DTKQAARDPSPQRNVEPL. 2 disulfides stabilise this stretch: Cys-350-Cys-364 and Cys-352-Cys-360. The propeptide occupies 372–389; that stretch reads DTKQAARDPSPQRNVEPL. 2 cysteine pairs are disulfide-bonded: Cys-390–Cys-404 and Cys-392–Cys-400. A propeptide spanning residues 412–429 is cleaved from the precursor; sequence DTKQAARDPSPQRNVEPL. Disulfide bonds link Cys-430–Cys-444 and Cys-432–Cys-440. Positions 452–469 are excised as a propeptide; it reads DTKQAARDPSPQRNVEPL. Disulfide bonds link Cys-470-Cys-484 and Cys-472-Cys-480. A propeptide spanning residues 492–509 is cleaved from the precursor; sequence DTKQAARDPSPQRNVEPL. 2 disulfides stabilise this stretch: Cys-510–Cys-524 and Cys-512–Cys-520. Residues 532 to 543 constitute a propeptide that is removed on maturation; that stretch reads NADTSANPEFLG.

Belongs to the endothelin/sarafotoxin family. In terms of tissue distribution, expressed by the venom gland.

It is found in the secreted. In terms of biological role, vasoconstrictor activity. These toxins cause cardiac arrest probably as a result of coronary vasospasm. Vasoconstrictor activity. Causes cardiac arrest probably as a result of coronary vasospasm. Displays high agonistic activities towards endothelin-2 receptor (EDNRB) (displays affinity in the picomolar range) and endothelin-1 receptor (EDNRA) (lower affinities). The sequence is that of Sarafotoxin from Atractaspis engaddensis (Israeli burrowing asp).